A 315-amino-acid chain; its full sequence is Methionyl-tRNA formyltransferase (315 aa).

113–116 provides a ligand contact to (6S)-5,6,7,8-tetrahydrofolate; sequence SLLP.

It belongs to the Fmt family.

It catalyses the reaction L-methionyl-tRNA(fMet) + (6R)-10-formyltetrahydrofolate = N-formyl-L-methionyl-tRNA(fMet) + (6S)-5,6,7,8-tetrahydrofolate + H(+). Its function is as follows. Attaches a formyl group to the free amino group of methionyl-tRNA(fMet). The formyl group appears to play a dual role in the initiator identity of N-formylmethionyl-tRNA by promoting its recognition by IF2 and preventing the misappropriation of this tRNA by the elongation apparatus. This is Methionyl-tRNA formyltransferase from Erwinia tasmaniensis (strain DSM 17950 / CFBP 7177 / CIP 109463 / NCPPB 4357 / Et1/99).